We begin with the raw amino-acid sequence, 359 residues long: Glutamate 5-kinase (359 aa).

Lysine 7 provides a ligand contact to ATP. Positions 47, 135, and 147 each coordinate substrate. 202 to 208 lines the ATP pocket; it reads SGGITSK. One can recognise a PUA domain in the interval 266–343; the sequence is KGSIFINEGA…DQLEDVLGYS (78 aa).

This sequence belongs to the glutamate 5-kinase family.

It localises to the cytoplasm. The catalysed reaction is L-glutamate + ATP = L-glutamyl 5-phosphate + ADP. It participates in amino-acid biosynthesis; L-proline biosynthesis; L-glutamate 5-semialdehyde from L-glutamate: step 1/2. In terms of biological role, catalyzes the transfer of a phosphate group to glutamate to form L-glutamate 5-phosphate. This chain is Glutamate 5-kinase, found in Kosmotoga olearia (strain ATCC BAA-1733 / DSM 21960 / TBF 19.5.1).